The following is a 614-amino-acid chain: Selenocysteine-specific elongation factor (614 aa).

Residues 1-173 (MIIATAGHVD…LPEREHASQH (173 aa)) enclose the tr-type G domain. The G1 stretch occupies residues 7-14 (GHVDHGKT). 7–14 (GHVDHGKT) is a GTP binding site. Residues 35-39 (GMTID) form a G2 region. The G3 stretch occupies residues 57 to 60 (DVPG). GTP contacts are provided by residues 57-61 (DVPGH) and 112-115 (TKAD). Positions 112–115 (TKAD) are G4. A G5 region spans residues 147 to 149 (AAT).

This sequence belongs to the TRAFAC class translation factor GTPase superfamily. Classic translation factor GTPase family. SelB subfamily.

It localises to the cytoplasm. In terms of biological role, translation factor necessary for the incorporation of selenocysteine into proteins. It probably replaces EF-Tu for the insertion of selenocysteine directed by the UGA codon. SelB binds GTP and GDP. This chain is Selenocysteine-specific elongation factor (selB), found in Escherichia coli (strain K12).